A 560-amino-acid polypeptide reads, in one-letter code: Clathrin interactor EPSIN 1 (560 aa).

One can recognise an ENTH domain in the interval Leu-20 to Arg-152. The tract at residues Asn-190–Val-288 is disordered. The span at Ser-193–Glu-220 shows a compositional bias: basic and acidic residues. Over residues Gln-221–Gly-233 the composition is skewed to polar residues. Residues Ser-234–Lys-251 show a composition bias toward basic and acidic residues. The segment covering Gly-274–Gln-287 has biased composition (polar residues). The Clathrin binding signature appears at Ile-296–Leu-300. Residues Asp-320–Phe-322 carry the ALPHA-ADR binding motif. Residues Ser-414–Leu-439 are compositionally biased toward polar residues. 2 disordered regions span residues Ser-414 to Asp-453 and Leu-517 to Gln-560. Low complexity predominate over residues Gln-526–Gln-536. The segment covering Phe-544–Gln-554 has biased composition (polar residues).

This sequence belongs to the epsin family. Interacts with clathrin, VTI11, GAMMA-ADR and VSR1. Binds to the deubiquitinating enzyme AMSH3. Mostly expressed in cotyledons and flowers, and, to a lower extent, in roots, leaves and siliques (at protein level).

The protein resides in the golgi apparatus. It is found in the prevacuolar compartment. The protein localises to the cytoplasm. Its subcellular location is the cytoplasmic vesicle. It localises to the clathrin-coated vesicle. The protein resides in the cytoskeleton. Its function is as follows. May have a role in transport via clathrin-coated vesicles from the trans-Golgi network to endosomes. Stimulates clathrin assembly. Does not seem to bind to phospholipids. Plays an important role in the vacuolar trafficking of soluble cargo proteins at the trans-Golgi network. The sequence is that of Clathrin interactor EPSIN 1 (EPSIN1) from Arabidopsis thaliana (Mouse-ear cress).